The chain runs to 202 residues: LexA repressor (202 aa).

The segment at residues 28–48 (QQEIARAFGFRSLGTVRNYLV) is a DNA-binding region (H-T-H motif). Active-site for autocatalytic cleavage activity residues include S120 and K157.

It belongs to the peptidase S24 family. In terms of assembly, homodimer.

It carries out the reaction Hydrolysis of Ala-|-Gly bond in repressor LexA.. Functionally, represses a number of genes involved in the response to DNA damage (SOS response), including recA and lexA. In the presence of single-stranded DNA, RecA interacts with LexA causing an autocatalytic cleavage which disrupts the DNA-binding part of LexA, leading to derepression of the SOS regulon and eventually DNA repair. This is LexA repressor from Syntrophotalea carbinolica (strain DSM 2380 / NBRC 103641 / GraBd1) (Pelobacter carbinolicus).